The following is a 366-amino-acid chain: DNA replication and repair protein RecF (366 aa).

An ATP-binding site is contributed by Gly-30 to Thr-37.

It belongs to the RecF family.

Its subcellular location is the cytoplasm. Functionally, the RecF protein is involved in DNA metabolism; it is required for DNA replication and normal SOS inducibility. RecF binds preferentially to single-stranded, linear DNA. It also seems to bind ATP. The chain is DNA replication and repair protein RecF from Azobacteroides pseudotrichonymphae genomovar. CFP2.